Reading from the N-terminus, the 366-residue chain is tRNA N6-adenosine threonylcarbamoyltransferase (366 aa).

A divalent metal cation-binding residues include histidine 130, histidine 134, and tyrosine 151. Substrate-binding positions include 151–155, aspartate 183, glycine 198, glutamate 202, and asparagine 297; that span reads YVSGG. Aspartate 325 lines the a divalent metal cation pocket.

Belongs to the KAE1 / TsaD family. In terms of assembly, component of the EKC/KEOPS complex composed of at least BUD32, CGI121, GON7, KAE1 and PCC1; the whole complex dimerizes. Requires a divalent metal cation as cofactor.

It localises to the cytoplasm. Its subcellular location is the nucleus. The catalysed reaction is L-threonylcarbamoyladenylate + adenosine(37) in tRNA = N(6)-L-threonylcarbamoyladenosine(37) in tRNA + AMP + H(+). In terms of biological role, component of the EKC/KEOPS complex that is required for the formation of a threonylcarbamoyl group on adenosine at position 37 (t(6)A37) in tRNAs that read codons beginning with adenine. The complex is probably involved in the transfer of the threonylcarbamoyl moiety of threonylcarbamoyl-AMP (TC-AMP) to the N6 group of A37. KAE1 likely plays a direct catalytic role in this reaction, but requires other protein(s) of the complex to fulfill this activity. The EKC/KEOPS complex also promotes both telomere uncapping and telomere elongation. The complex is required for efficient recruitment of transcriptional coactivators. The sequence is that of tRNA N6-adenosine threonylcarbamoyltransferase from Cryptococcus neoformans var. neoformans serotype D (strain JEC21 / ATCC MYA-565) (Filobasidiella neoformans).